Here is a 173-residue protein sequence, read N- to C-terminus: ELTSVAGSGRVDSTPLGSRGVTDLERGSFDVTVDKTNIGPLDYNLRAIKMRSKRSLSRPQAIISNCNGVNGEGPSIMVSGGPDYVTFSIKTSNTVRPAQLTIPARPGYNDVSMIYDGQNLKAKVNDIARSIPLTGKIEMRQAGLLFGACNGYANFRGEVDDFEMYECIPPFWG.

Positions 1-23 (ELTSVAGSGRVDSTPLGSRGVTD) are disordered.

In terms of tissue distribution, component of the acid-insoluble and acid-soluble organic matrix of calcified layers of the shell (at protein level).

The protein localises to the secreted. This is an uncharacterized protein from Lottia gigantea (Giant owl limpet).